Reading from the N-terminus, the 456-residue chain is Argininosuccinate lyase (456 aa).

It belongs to the lyase 1 family. Argininosuccinate lyase subfamily.

The protein localises to the cytoplasm. The catalysed reaction is 2-(N(omega)-L-arginino)succinate = fumarate + L-arginine. It functions in the pathway amino-acid biosynthesis; L-arginine biosynthesis; L-arginine from L-ornithine and carbamoyl phosphate: step 3/3. The sequence is that of Argininosuccinate lyase from Shewanella woodyi (strain ATCC 51908 / MS32).